The sequence spans 610 residues: GATOR complex protein NPRL3 (610 aa).

At Ser437 the chain carries Phosphoserine. The interval 474-501 (REASEDHSSLASDNIAVQPSSSHKSNFS) is disordered. The segment covering 482-501 (SLASDNIAVQPSSSHKSNFS) has biased composition (polar residues).

The protein belongs to the NPR3 family. Component of the GATOR complex consisting of mio, Nup44A/Seh1, Im11, Nplr3, Nplr2, Wdr24, Wdr59 and Sec13. Within the GATOR complex, probable component of the GATOR1 subcomplex which is likely composed of Iml1, Nplr2 and Nplr3. Interacts with Nprl2.

Its subcellular location is the cytoplasm. The protein localises to the lysosome. Its function is as follows. An essential component of the GATOR subcomplex GATOR1 which functions as an inhibitor of the amino acid-sensing branch of the TORC1 signaling pathway. The two GATOR subcomplexes, GATOR1 and GATOR2, regulate the TORC1 pathway in order to mediate metabolic homeostasis, female gametogenesis and the response to amino acid limitation and complete starvation. The function of GATOR1 in negatively regulating the TORC1 pathway is essential for maintaining baseline levels of TORC1 activity under nutrient rich conditions, and for promoting survival during amino acid or complete starvation by inhibiting TORC1-dependent cell growth and promoting catabolic metabolism and autophagy. In addition, this inhibition of TORC1 is necessary to maintain female fertility under normal conditions and during periods of nutrient stress. GATOR1 and GATOR2 act at different stages of oogenesis to regulate TORC1 in order to control meiotic entry and promote oocyte growth and development. After exactly four mitotic cyst divisions, the GATOR1 complex members (Iml1, Nprl2 and Nprl3) down-regulate TORC1 to slow cellular metabolism and promote the mitotic/meiotic transition. At later stages of oogenesis, the mio and Nup44A components of the GATOR2 complex inhibit GATOR1 and thus activate TORC1 to promote meiotic progression, and drive oocyte growth and development. This is GATOR complex protein NPRL3 from Drosophila melanogaster (Fruit fly).